A 379-amino-acid polypeptide reads, in one-letter code: Queuine tRNA-ribosyltransferase (379 aa).

Asp-94 acts as the Proton acceptor in catalysis. Residues 94–98 (DSGGF), Asp-148, Gln-191, and Gly-218 contribute to the substrate site. Positions 249 to 255 (GVGSPDA) are RNA binding. Residue Asp-268 is the Nucleophile of the active site. An RNA binding; important for wobble base 34 recognition region spans residues 273 to 277 (TRIAR). Zn(2+)-binding residues include Cys-306, Cys-308, Cys-311, and His-337.

It belongs to the queuine tRNA-ribosyltransferase family. In terms of assembly, homodimer. Within each dimer, one monomer is responsible for RNA recognition and catalysis, while the other monomer binds to the replacement base PreQ1. It depends on Zn(2+) as a cofactor.

The catalysed reaction is 7-aminomethyl-7-carbaguanine + guanosine(34) in tRNA = 7-aminomethyl-7-carbaguanosine(34) in tRNA + guanine. Its pathway is tRNA modification; tRNA-queuosine biosynthesis. Its function is as follows. Catalyzes the base-exchange of a guanine (G) residue with the queuine precursor 7-aminomethyl-7-deazaguanine (PreQ1) at position 34 (anticodon wobble position) in tRNAs with GU(N) anticodons (tRNA-Asp, -Asn, -His and -Tyr). Catalysis occurs through a double-displacement mechanism. The nucleophile active site attacks the C1' of nucleotide 34 to detach the guanine base from the RNA, forming a covalent enzyme-RNA intermediate. The proton acceptor active site deprotonates the incoming PreQ1, allowing a nucleophilic attack on the C1' of the ribose to form the product. After dissociation, two additional enzymatic reactions on the tRNA convert PreQ1 to queuine (Q), resulting in the hypermodified nucleoside queuosine (7-(((4,5-cis-dihydroxy-2-cyclopenten-1-yl)amino)methyl)-7-deazaguanosine). This is Queuine tRNA-ribosyltransferase from Staphylococcus aureus (strain bovine RF122 / ET3-1).